The chain runs to 227 residues: Ribonuclease 3 (227 aa).

An RNase III domain is found at 3–130 (TNAISKIIKY…LIGAIYLDGG (128 aa)). Glutamate 43 is a Mg(2+) binding site. Aspartate 47 is a catalytic residue. Mg(2+) contacts are provided by asparagine 116 and glutamate 119. The active site involves glutamate 119. The DRBM domain maps to 155–224 (DAKTILQEWA…ASLMLAKINY (70 aa)).

The protein belongs to the ribonuclease III family. As to quaternary structure, homodimer. Mg(2+) serves as cofactor.

It is found in the cytoplasm. The catalysed reaction is Endonucleolytic cleavage to 5'-phosphomonoester.. Its function is as follows. Digests double-stranded RNA. Involved in the processing of primary rRNA transcript to yield the immediate precursors to the large and small rRNAs (23S and 16S). Processes some mRNAs, and tRNAs when they are encoded in the rRNA operon. Processes pre-crRNA and tracrRNA of type II CRISPR loci if present in the organism. The polypeptide is Ribonuclease 3 (Ehrlichia ruminantium (strain Welgevonden)).